A 919-amino-acid polypeptide reads, in one-letter code: Alanine--tRNA ligase (919 aa).

4 residues coordinate Zn(2+): histidine 565, histidine 569, cysteine 667, and histidine 671.

The protein belongs to the class-II aminoacyl-tRNA synthetase family. It depends on Zn(2+) as a cofactor.

The protein localises to the cytoplasm. It catalyses the reaction tRNA(Ala) + L-alanine + ATP = L-alanyl-tRNA(Ala) + AMP + diphosphate. In terms of biological role, catalyzes the attachment of alanine to tRNA(Ala) in a two-step reaction: alanine is first activated by ATP to form Ala-AMP and then transferred to the acceptor end of tRNA(Ala). Also edits incorrectly charged Ser-tRNA(Ala) and Gly-tRNA(Ala) via its editing domain. This chain is Alanine--tRNA ligase, found in Leptospira biflexa serovar Patoc (strain Patoc 1 / Ames).